The primary structure comprises 491 residues: Glutamate--tRNA ligase (491 aa).

The short motif at Pro-13 to Asn-23 is the 'HIGH' region element. Residues Cys-110, Cys-112, Cys-137, and His-139 each contribute to the Zn(2+) site. Residues Lys-254 to Arg-258 carry the 'KMSKS' region motif. Lys-257 contributes to the ATP binding site.

Belongs to the class-I aminoacyl-tRNA synthetase family. Glutamate--tRNA ligase type 1 subfamily. Monomer. Zn(2+) serves as cofactor.

It is found in the cytoplasm. It catalyses the reaction tRNA(Glu) + L-glutamate + ATP = L-glutamyl-tRNA(Glu) + AMP + diphosphate. Functionally, catalyzes the attachment of glutamate to tRNA(Glu) in a two-step reaction: glutamate is first activated by ATP to form Glu-AMP and then transferred to the acceptor end of tRNA(Glu). This is Glutamate--tRNA ligase from Listeria welshimeri serovar 6b (strain ATCC 35897 / DSM 20650 / CCUG 15529 / CIP 8149 / NCTC 11857 / SLCC 5334 / V8).